The sequence spans 367 residues: Serine/threonine-protein kinase Sgk2 (367 aa).

A disordered region spans residues 1 to 26 (MNSSPAGTPSPQPSRANGNINLGPSA). Position 10 is a phosphoserine (S10). The Protein kinase domain occupies 35–292 (FDFLKVIGKG…FLEIKNHVFF (258 aa)). Residues 41-49 (IGKGNYGKV) and K64 contribute to the ATP site. Residues 68 to 78 (KKSILKKKEQS) carry the Nuclear localization signal motif. D159 acts as the Proton acceptor in catalysis. T193 is subject to Phosphothreonine; by PDPK1. The 75-residue stretch at 293-367 (SPINWDDLYH…APEDDDILDC (75 aa)) folds into the AGC-kinase C-terminal domain. A phosphoserine mark is found at S334 and S356. Phosphotyrosine is present on Y357.

This sequence belongs to the protein kinase superfamily. AGC Ser/Thr protein kinase family. Activated by phosphorylation on Ser-356 by an unknown kinase (may be mTORC2 but not confirmed), transforming it into a substrate for PDPK1 which then phosphorylates it on Thr-193. Highly expressed in liver, kidney and pancreas, and at lower levels in brain.

Its subcellular location is the cytoplasm. It localises to the nucleus. The catalysed reaction is L-seryl-[protein] + ATP = O-phospho-L-seryl-[protein] + ADP + H(+). It carries out the reaction L-threonyl-[protein] + ATP = O-phospho-L-threonyl-[protein] + ADP + H(+). Two specific sites, one in the kinase domain (Thr-193) and the other in the C-terminal regulatory region (Ser-356), need to be phosphorylated for its full activation. Its function is as follows. Serine/threonine-protein kinase which is involved in the regulation of a wide variety of ion channels, membrane transporters, cell growth, survival and proliferation. Up-regulates Na(+) channels: SCNN1A/ENAC, K(+) channels: KCNA3/Kv1.3, KCNE1 and KCNQ1, amino acid transporter: SLC6A19, glutamate transporter: SLC1A6/EAAT4, glutamate receptors: GRIA1/GLUR1 and GRIK2/GLUR6, Na(+)/H(+) exchanger: SLC9A3/NHE3, and the Na(+)/K(+) ATPase. In Homo sapiens (Human), this protein is Serine/threonine-protein kinase Sgk2 (SGK2).